Reading from the N-terminus, the 535-residue chain is Dimethylaniline monooxygenase [N-oxide-forming] 2 (535 aa).

Residues 9-13 (GAGVS), E32, 40-41 (LW), and 61-62 (NT) each bind FAD. Residues 60 to 61 (TN) and 195 to 198 (SAAD) each bind NADP(+). K492 participates in a covalent cross-link: Glycyl lysine isopeptide (Lys-Gly) (interchain with G-Cter in SUMO). The helical transmembrane segment at 510-530 (APVSFLIKVLGLLAIVLAFFF) threads the bilayer.

It belongs to the FMO family. Requires FAD as cofactor. Mg(2+) is required as a cofactor.

It localises to the microsome membrane. It is found in the endoplasmic reticulum membrane. Its function is as follows. Catalyzes the oxidative metabolism of numerous xenobiotics, including mainly therapeutic drugs and insecticides that contain a soft nucleophile, most commonly nitrogen and sulfur and participates to their bioactivation. The chain is Dimethylaniline monooxygenase [N-oxide-forming] 2 from Rattus norvegicus (Rat).